We begin with the raw amino-acid sequence, 232 residues long: Ribose-5-phosphate isomerase A (232 aa).

Residues Thr-28–Thr-31, Asp-83–Asp-86, and Lys-96–Gly-99 contribute to the substrate site. The Proton acceptor role is filled by Glu-105. Substrate is bound at residue Lys-123.

Belongs to the ribose 5-phosphate isomerase family. In terms of assembly, homodimer.

It catalyses the reaction aldehydo-D-ribose 5-phosphate = D-ribulose 5-phosphate. It functions in the pathway carbohydrate degradation; pentose phosphate pathway; D-ribose 5-phosphate from D-ribulose 5-phosphate (non-oxidative stage): step 1/1. Catalyzes the reversible conversion of ribose-5-phosphate to ribulose 5-phosphate. The chain is Ribose-5-phosphate isomerase A from Rhodopseudomonas palustris (strain ATCC BAA-98 / CGA009).